A 219-amino-acid polypeptide reads, in one-letter code: MAESSGSPHRLLYKQVGSPHWKETFRQGCLERMRNSRHRLLNKYRQAAGSTPGTASDRLLVQEVMEEEWASLQSVENCPEALLQLELPLDLAVLQDIEQELCNEEKSIISEYEEDLEFDESCLRRMLAEWEANSLICPVCIKYNLRIMNSVVTCPCGLHIPVHSTDLTEQKLRACLEENVNEHSVHCPHTPVFSVTGGTEEKPSLLMNCLTCDTWAVIL.

A Phosphoserine modification is found at Ser18. The RIP-type zinc finger occupies 137–212 (CPVCIKYNLR…PSLLMNCLTC (76 aa)). The segment at 164-180 (STDLTEQKLRACLEENV) is mediates nuclear export.

In terms of assembly, interacts with the RPA1 subunit of RPA complex. Sumoylated; required for localization in the nuclear PML body and transport of RPA complex in PML body. Upon UV irradiation and during S phase, it is desumoylated, releasing RPA complex that is translocated to sites of DNA damage. Sumoylation takes place at different Lys residues.

It is found in the nucleus. Its function is as follows. Mediates the import of RPA complex into the nucleus, possibly via some interaction with importin beta. Sumoylation mediates the localization of RPA complex into the PML body of the nucleus, thereby participating in RPA function in DNA metabolism. The polypeptide is RPA-interacting protein (Rpain) (Mus musculus (Mouse)).